The chain runs to 331 residues: Pantothenate kinase (331 aa).

109–116 (GSVAVGKS) is a binding site for ATP.

Belongs to the prokaryotic pantothenate kinase family.

The protein localises to the cytoplasm. The enzyme catalyses (R)-pantothenate + ATP = (R)-4'-phosphopantothenate + ADP + H(+). It participates in cofactor biosynthesis; coenzyme A biosynthesis; CoA from (R)-pantothenate: step 1/5. This chain is Pantothenate kinase, found in Sinorhizobium medicae (strain WSM419) (Ensifer medicae).